The chain runs to 382 residues: Bifunctional enzyme IspD/IspF (382 aa).

The 2-C-methyl-D-erythritol 4-phosphate cytidylyltransferase stretch occupies residues M1 to R225. Residues R225 to I382 form a 2-C-methyl-D-erythritol 2,4-cyclodiphosphate synthase region. D231 and H233 together coordinate a divalent metal cation. 4-CDP-2-C-methyl-D-erythritol 2-phosphate contacts are provided by residues D231 to H233 and H257 to S258. H265 provides a ligand contact to a divalent metal cation. Residues D279–G281, T355–E358, F362, and R365 each bind 4-CDP-2-C-methyl-D-erythritol 2-phosphate.

In the N-terminal section; belongs to the IspD/TarI cytidylyltransferase family. IspD subfamily. The protein in the C-terminal section; belongs to the IspF family. Requires a divalent metal cation as cofactor.

It catalyses the reaction 2-C-methyl-D-erythritol 4-phosphate + CTP + H(+) = 4-CDP-2-C-methyl-D-erythritol + diphosphate. The enzyme catalyses 4-CDP-2-C-methyl-D-erythritol 2-phosphate = 2-C-methyl-D-erythritol 2,4-cyclic diphosphate + CMP. The protein operates within isoprenoid biosynthesis; isopentenyl diphosphate biosynthesis via DXP pathway; isopentenyl diphosphate from 1-deoxy-D-xylulose 5-phosphate: step 2/6. It functions in the pathway isoprenoid biosynthesis; isopentenyl diphosphate biosynthesis via DXP pathway; isopentenyl diphosphate from 1-deoxy-D-xylulose 5-phosphate: step 4/6. Bifunctional enzyme that catalyzes the formation of 4-diphosphocytidyl-2-C-methyl-D-erythritol from CTP and 2-C-methyl-D-erythritol 4-phosphate (MEP) (IspD), and catalyzes the conversion of 4-diphosphocytidyl-2-C-methyl-D-erythritol 2-phosphate (CDP-ME2P) to 2-C-methyl-D-erythritol 2,4-cyclodiphosphate (ME-CPP) with a corresponding release of cytidine 5-monophosphate (CMP) (IspF). In Rhizorhabdus wittichii (strain DSM 6014 / CCUG 31198 / JCM 15750 / NBRC 105917 / EY 4224 / RW1) (Sphingomonas wittichii), this protein is Bifunctional enzyme IspD/IspF.